The sequence spans 457 residues: MTTDEGAKNSRGNPAATVAEQGEDVTSKKDRGVLKIVKRVGHGEETPMIGDRVYVHYNGKLANGKKFDSSHDRNEPFVFSIGKGQVIKAWDIGVATMKKGEICHLLCKPEYAYGATGSLPKIPSNATLFFEVELLDFKGEDLLEDGGIIRRTKRRGEGYSNPNEGARVQIHLEGRCGGRVFDCRDVAFTVGEGEDHDIPIGIDKALEKMQREEQCILHLGPRYGFGEAGKPKFGIEPNAELIYEVTLKSFEKAKESWEMDTKEKLEQAAIVKEKGTVYFKGGKYVQAVIQYGKIVSWLEMEYGLSEKESKASESFLLAAFLNLAMCYLKLREYTKAVECCDKALGLDSANEKGLYRRGEAQLLMNEFESAKGDFEKVLEVNPQNKAARLQIFMCQKKAKEHNERDRRTYANMFKKFAEQDAKEEANKAMSKKTSEGVTNEKLTASHAVEEEKPEGHV.

Met1 is modified (N-acetylmethionine). Residues 1 to 26 (MTTDEGAKNSRGNPAATVAEQGEDVT) are disordered. Lys28 bears the N6-acetyllysine mark. 2 PPIase FKBP-type domains span residues 50 to 138 (GDRV…LDFK) and 165 to 251 (GARV…KSFE). TPR repeat units follow at residues 268-301 (AAIV…LEME), 317-350 (LAAF…DSAN), and 351-384 (EKGL…NPQN). The interval 421–457 (AKEEANKAMSKKTSEGVTNEKLTASHAVEEEKPEGHV) is disordered. Ser445 is modified (phosphoserine). Over residues 447-457 (AVEEEKPEGHV) the composition is skewed to basic and acidic residues.

In terms of assembly, part of a heteromultimeric cytoplasmic complex with HSP90AA1, HSPA1A/HSPA1B and steroid receptors. Upon ligand binding dissociates from the complex and FKBP4 takes its place. Interacts with functionally mature heterooligomeric progesterone receptor complexes along with HSP90 and TEBP. Interacts with NR3C1. Interacts with Akt/AKT1 and PHLPP1; enhancing dephosphorylation and subsequent activation of Akt/AKT1. Interacts with IFI44L; this interaction modulates the kinase activity of IKBKB and IKBKE. Interacts with IKBKB and IKBKE. Acetylation impairs ability to promote interaction between Akt/AKT1 and PHLPP1. Deacetylation by SIRT7 promotes interaction between Akt/AKT1 and PHLPP1, leading to suppress Akt/AKT1 activation. Post-translationally, ubiquitinated, leading to degradation in a proteasome-dependent manner. Deubiquitinated by USP49, leading to stabilization.

Its subcellular location is the cytoplasm. The protein localises to the nucleus. The enzyme catalyses [protein]-peptidylproline (omega=180) = [protein]-peptidylproline (omega=0). With respect to regulation, inhibited by both FK506 and rapamycin. Immunophilin protein with PPIase and co-chaperone activities. Component of unligated steroid receptors heterocomplexes through interaction with heat-shock protein 90 (HSP90). Plays a role in the intracellular trafficking of heterooligomeric forms of steroid hormone receptors maintaining the complex into the cytoplasm when unliganded. Acts as a regulator of Akt/AKT1 activity by promoting the interaction between Akt/AKT1 and PHLPP1, thereby enhancing dephosphorylation and subsequent activation of Akt/AKT1. Interacts with IKBKE and IKBKB which facilitates IKK complex assembly leading to increased IKBKE and IKBKB kinase activity, NF-kappaB activation, and IFN production. In Saimiri boliviensis boliviensis (Bolivian squirrel monkey), this protein is Peptidyl-prolyl cis-trans isomerase FKBP5 (FKBP5).